The following is a 501-amino-acid chain: Lysine--tRNA ligase (501 aa).

Positions 411 and 418 each coordinate Mg(2+).

The protein belongs to the class-II aminoacyl-tRNA synthetase family. In terms of assembly, homodimer. Requires Mg(2+) as cofactor.

Its subcellular location is the cytoplasm. It catalyses the reaction tRNA(Lys) + L-lysine + ATP = L-lysyl-tRNA(Lys) + AMP + diphosphate. In Pseudomonas aeruginosa (strain LESB58), this protein is Lysine--tRNA ligase.